The following is a 232-amino-acid chain: Ureidoacrylate amidohydrolase RutB (232 aa).

Aspartate 26 serves as the catalytic Proton acceptor. The active site involves lysine 135. Cysteine 168 acts as the Nucleophile in catalysis.

This sequence belongs to the isochorismatase family. RutB subfamily.

It catalyses the reaction (Z)-3-ureidoacrylate + H2O + H(+) = (Z)-3-aminoacrylate + NH4(+) + CO2. It carries out the reaction (Z)-3-ureidoacrylate + H2O = (Z)-3-aminoacrylate + carbamate + H(+). The catalysed reaction is (Z)-2-methylureidoacrylate + H2O + H(+) = (Z)-2-methylaminoacrylate + NH4(+) + CO2. In terms of biological role, hydrolyzes ureidoacrylate to form aminoacrylate and carbamate. The carbamate hydrolyzes spontaneously, thereby releasing one of the nitrogen atoms of the pyrimidine ring as ammonia and one of its carbon atoms as CO2. This Cronobacter turicensis (strain DSM 18703 / CCUG 55852 / LMG 23827 / z3032) protein is Ureidoacrylate amidohydrolase RutB.